The chain runs to 423 residues: MSIQIPRGTQDILPGTVELWQYIEGQAREICRRYNYKEIRTPIFEHTELFLRGVGDTTDIVQKEMYSFQDRGERSLTLRPEGTAPVVRSYVENKMFGDATQPTKLYYIGQMFRYERPQAGRYRQFVQFGIEAIGSNDPAIDAEVIALAVEFYRGMGLKNIKVVLNSLGDAASRQAHRDALIAHFEPRIGEFCSDCQSRLEKNPLRILDCKKDRNHELMGTAPSITEYLNEDSAVYYEKVQELLTMMDVPFEKDPNLVRGLDYYQHTVFEIMSEAEGFGAITTLSGGGRYNGLVQEIGGPEMPGIGFAMSIERLIMALKAENIELPIEHSIDCYVVALGEKAKDHAAKVAFDLRKAGLSVEKDYLDRKMKAQFKSADRLKAKFVAVLGEDELDKGIINLKDMATGEQEEVALDVFASYVAEKLI.

It belongs to the class-II aminoacyl-tRNA synthetase family. As to quaternary structure, homodimer.

Its subcellular location is the cytoplasm. The enzyme catalyses tRNA(His) + L-histidine + ATP = L-histidyl-tRNA(His) + AMP + diphosphate + H(+). The sequence is that of Histidine--tRNA ligase 2 from Bacillus cereus (strain ATCC 10987 / NRS 248).